Here is a 268-residue protein sequence, read N- to C-terminus: MKNKLIIGRYLPINSFVHHLDPRAKLMFVFLFIILIFFCHSPLTYLWVFALILFIMRLAKIQLWFLIKGLTPIFFFLIFTLMMHIFLTKGGYVLVEWHGITIETNGILEGLYISLRLIGIVMIATIMTLSTSPIDLTDAFERLLAPLKMFKLPVHQLSMIMSIALRFIPTLMDELDKIILAQKSRGSEISSGNIATRIKSFIPLLVPLFISAFQRAEELAVAMEVRGYDANVKRTSYRQLKWQLRDTISLTMIIPIAIILFVLKYSGV.

The next 5 membrane-spanning stretches (helical) occupy residues 28 to 48 (FVFL…YLWV), 63 to 83 (LWFL…TLMM), 107 to 127 (ILEG…ATIM), 152 to 172 (LPVH…PTLM), and 248 to 268 (ISLT…YSGV).

Belongs to the energy-coupling factor EcfT family. As to quaternary structure, forms a stable energy-coupling factor (ECF) transporter complex composed of 2 membrane-embedded substrate-binding proteins (S component), 2 ATP-binding proteins (A component) and 2 transmembrane proteins (T component). May be able to interact with more than 1 S component at a time.

It localises to the cell membrane. Functionally, transmembrane (T) component of an energy-coupling factor (ECF) ABC-transporter complex. Unlike classic ABC transporters this ECF transporter provides the energy necessary to transport a number of different substrates. This is Energy-coupling factor transporter transmembrane protein EcfT from Staphylococcus aureus (strain 04-02981).